The following is a 2463-amino-acid chain: Protein TIC 214 (2463 aa).

The next 6 membrane-spanning stretches (helical) occupy residues valine 18–leucine 38, phenylalanine 60–leucine 80, isoleucine 86–tryptophan 106, leucine 127–methionine 147, phenylalanine 170–tryptophan 190, and leucine 297–tyrosine 317. Positions glutamine 326 to lysine 441 form a coiled coil. Disordered regions lie at residues alanine 792–asparagine 841, serine 1230–lysine 1249, serine 1393–phenylalanine 1417, glutamate 2116–lysine 2136, and lysine 2162–glutamine 2187. Over residues proline 794–lysine 830 the composition is skewed to basic residues. Composition is skewed to basic and acidic residues over residues lysine 832 to asparagine 841, isoleucine 1231 to lysine 1249, and glutamate 1397 to phenylalanine 1417. Residues tryptophan 2049–lysine 2192 adopt a coiled-coil conformation. Basic residues predominate over residues lysine 2124–lysine 2136.

The protein belongs to the TIC214 family. Part of the Tic complex.

It is found in the plastid. The protein localises to the chloroplast inner membrane. Involved in protein precursor import into chloroplasts. May be part of an intermediate translocation complex acting as a protein-conducting channel at the inner envelope. The polypeptide is Protein TIC 214 (Oenothera elata subsp. hookeri (Hooker's evening primrose)).